The following is a 150-amino-acid chain: Large ribosomal subunit protein eL19 (150 aa).

A disordered region spans residues 56-90; it reads RGISSGRLKERKHKRRSKGEGRKHGSRKGKSGART.

Belongs to the eukaryotic ribosomal protein eL19 family. As to quaternary structure, part of the 50S ribosomal subunit.

In terms of biological role, binds to the 23S rRNA. This Sulfolobus acidocaldarius (strain ATCC 33909 / DSM 639 / JCM 8929 / NBRC 15157 / NCIMB 11770) protein is Large ribosomal subunit protein eL19.